The sequence spans 658 residues: Probable rhamnogalacturonate lyase B (658 aa).

A signal peptide spans 1-19 (MRFAIPLGAACAWAGVALA). N-linked (GlcNAc...) asparagine glycosylation is found at N110, N143, N239, N280, N522, N530, N592, and N633.

The protein belongs to the polysaccharide lyase 4 family.

Its subcellular location is the secreted. It catalyses the reaction Endotype eliminative cleavage of L-alpha-rhamnopyranosyl-(1-&gt;4)-alpha-D-galactopyranosyluronic acid bonds of rhamnogalacturonan I domains in ramified hairy regions of pectin leaving L-rhamnopyranose at the reducing end and 4-deoxy-4,5-unsaturated D-galactopyranosyluronic acid at the non-reducing end.. Pectinolytic enzymes consist of four classes of enzymes: pectin lyase, polygalacturonase, pectin methylesterase and rhamnogalacturonase. Degrades the rhamnogalacturonan I (RG-I) backbone of pectin. The polypeptide is Probable rhamnogalacturonate lyase B (rglB) (Aspergillus fumigatus (strain CBS 144.89 / FGSC A1163 / CEA10) (Neosartorya fumigata)).